Consider the following 523-residue polypeptide: UDP-glucuronosyltransferase 3A1 (523 aa).

An N-terminal signal peptide occupies residues 1–22 (MVGQRVLLLVAFLLSGVLLSEA). The Extracellular segment spans residues 23–483 (AKILTISTLG…YAFQQPWHEQ (461 aa)). Asn-52 carries N-linked (GlcNAc...) asparagine glycosylation. The chain crosses the membrane as a helical span at residues 484 to 504 (YLIDVFVFLLGLTLGTMWLCG). Topologically, residues 505-523 (KLLGVVARWLRGARKVKKT) are cytoplasmic.

The protein belongs to the UDP-glycosyltransferase family.

Its subcellular location is the membrane. It catalyses the reaction glucuronate acceptor + UDP-alpha-D-glucuronate = acceptor beta-D-glucuronoside + UDP + H(+). UDP-glucuronosyltransferases catalyze phase II biotransformation reactions in which lipophilic substrates are conjugated with glucuronic acid to increase water solubility and enhance excretion. They are of major importance in the conjugation and subsequent elimination of potentially toxic xenobiotics and endogenous compounds. This is UDP-glucuronosyltransferase 3A1 (UGT3A1) from Homo sapiens (Human).